The sequence spans 143 residues: Insulin-like growth factor 1 (143 aa).

The N-terminal stretch at 1–32 (MITPTVKMRILSSSHLFYLALCLLTFTSSATA) is a signal peptide. Residues 33–61 (GPETLCGAELVDALQFVCGDRGFYFNKPT) form a b region. Disulfide bonds link Cys38/Cys80, Cys50/Cys93, and Cys79/Cys84. The tract at residues 62-73 (GYGSSSRRAPQT) is c. Residues 74–94 (GIVDECCFRSCDLRRLEMYCA) are a. Residues 95-102 (PLKPAKAA) form a d region. The tract at residues 99 to 143 (AKAARSVRAQRHTDMPKTQKYQPPSTNKKMKSQRRRKGSTFEEHK) is disordered. A propeptide spans 103–143 (RSVRAQRHTDMPKTQKYQPPSTNKKMKSQRRRKGSTFEEHK) (e peptide). The segment covering 126–136 (KKMKSQRRRKG) has biased composition (basic residues).

It belongs to the insulin family. As to quaternary structure, forms a ternary complex with IGFR1 and ITGAV:ITGB3. Forms a ternary complex with IGFR1 and ITGA6:ITGB4. Forms a ternary complex with IGFBP3 and ALS.

The protein resides in the secreted. Its function is as follows. The insulin-like growth factors, isolated from plasma, are structurally and functionally related to insulin but have a much higher growth-promoting activity. May be a physiological regulator of [1-14C]-2-deoxy-D-glucose (2DG) transport and glycogen synthesis in osteoblasts. Stimulates glucose transport in bone-derived osteoblastic (PyMS) cells and is effective at much lower concentrations than insulin, not only regarding glycogen and DNA synthesis but also with regard to enhancing glucose uptake. May play a role in synapse maturation. Ca(2+)-dependent exocytosis of IGF1 is required for sensory perception of smell in the olfactory bulb. Acts as a ligand for IGF1R. Binds to the alpha subunit of IGF1R, leading to the activation of the intrinsic tyrosine kinase activity which autophosphorylates tyrosine residues in the beta subunit thus initiating a cascade of down-stream signaling events leading to activation of the PI3K-AKT/PKB and the Ras-MAPK pathways. Binds to integrins ITGAV:ITGB3 and ITGA6:ITGB4. Its binding to integrins and subsequent ternary complex formation with integrins and IGFR1 are essential for IGF1 signaling. Induces the phosphorylation and activation of IGFR1, MAPK3/ERK1, MAPK1/ERK2 and AKT1. As part of the MAPK/ERK signaling pathway, acts as a negative regulator of apoptosis in cardiomyocytes via promotion of STUB1/CHIP-mediated ubiquitination and degradation of ICER-type isoforms of CREM. This chain is Insulin-like growth factor 1, found in Oryctolagus cuniculus (Rabbit).